A 231-amino-acid polypeptide reads, in one-letter code: Large ribosomal subunit protein uL1 (231 aa).

It belongs to the universal ribosomal protein uL1 family. As to quaternary structure, part of the 50S ribosomal subunit.

Functionally, binds directly to 23S rRNA. The L1 stalk is quite mobile in the ribosome, and is involved in E site tRNA release. Its function is as follows. Protein L1 is also a translational repressor protein, it controls the translation of the L11 operon by binding to its mRNA. The chain is Large ribosomal subunit protein uL1 from Azoarcus sp. (strain BH72).